A 585-amino-acid chain; its full sequence is Arginine--tRNA ligase (585 aa).

The 'HIGH' region motif lies at 131–141; the sequence is ANPTGPMHVGH.

It belongs to the class-I aminoacyl-tRNA synthetase family. In terms of assembly, monomer.

The protein localises to the cytoplasm. It catalyses the reaction tRNA(Arg) + L-arginine + ATP = L-arginyl-tRNA(Arg) + AMP + diphosphate. This is Arginine--tRNA ligase from Allorhizobium ampelinum (strain ATCC BAA-846 / DSM 112012 / S4) (Agrobacterium vitis (strain S4)).